Reading from the N-terminus, the 244-residue chain is Transcription factor Sox-12 (244 aa).

Positions 1-22 (MVQNKTTGSCPKPTEVAPGGPS) are disordered. The segment at residues 31-99 (IKRPMNAFMV…KHMADYPNYK (69 aa)) is a DNA-binding region (HMG box). 2 disordered regions span residues 101-137 (RPRRRSRTQESKTRARLPRSTATCQSVPSPCLSQMDT) and 152-193 (GDQV…HEGL). Polar residues-rich tracts occupy residues 120-137 (STATCQSVPSPCLSQMDT) and 176-186 (HTKTVPSSPQS).

Expressed at a low level in embryos, and in the adult lung, ovary, skeletal muscle, testis, brain and heart.

The protein localises to the nucleus. Transcription factor that binds to the sequence 5'-AACAAT-3'. Acts as a transcriptional activator. The sequence is that of Transcription factor Sox-12 (sox12) from Xenopus laevis (African clawed frog).